A 350-amino-acid polypeptide reads, in one-letter code: S-adenosylmethionine:tRNA ribosyltransferase-isomerase (350 aa).

The protein belongs to the QueA family. As to quaternary structure, monomer.

It localises to the cytoplasm. It carries out the reaction 7-aminomethyl-7-carbaguanosine(34) in tRNA + S-adenosyl-L-methionine = epoxyqueuosine(34) in tRNA + adenine + L-methionine + 2 H(+). It functions in the pathway tRNA modification; tRNA-queuosine biosynthesis. Its function is as follows. Transfers and isomerizes the ribose moiety from AdoMet to the 7-aminomethyl group of 7-deazaguanine (preQ1-tRNA) to give epoxyqueuosine (oQ-tRNA). The chain is S-adenosylmethionine:tRNA ribosyltransferase-isomerase from Aliivibrio fischeri (strain ATCC 700601 / ES114) (Vibrio fischeri).